A 517-amino-acid polypeptide reads, in one-letter code: C-22 sterol desaturase ERG5 (517 aa).

The helical transmembrane segment at 21 to 41 (LAVAKATGSPITTLFTIIFLI) threads the bilayer. Cys-458 is a heme binding site.

This sequence belongs to the cytochrome P450 family. The cofactor is heme.

The protein localises to the endoplasmic reticulum membrane. The catalysed reaction is 5-dehydroepisterol + NADPH + O2 + H(+) = ergosta-5,7,22,24(28)-tetraen-3beta-ol + NADP(+) + 2 H2O. It participates in steroid metabolism; ergosterol biosynthesis; ergosterol from zymosterol: step 4/5. Functionally, C-22 sterol desaturase; part of the third module of ergosterol biosynthesis pathway that includes the late steps of the pathway. ERG5 converts 5-dehydroepisterol into ergosta-5,7,22,24(28)-tetraen-3beta-ol by forming the C-22(23) double bond in the sterol side chain. The third module or late pathway involves the ergosterol synthesis itself through consecutive reactions that mainly occur in the endoplasmic reticulum (ER) membrane. Firstly, the squalene synthase ERG9 catalyzes the condensation of 2 farnesyl pyrophosphate moieties to form squalene, which is the precursor of all steroids. Squalene synthase is crucial for balancing the incorporation of farnesyl diphosphate (FPP) into sterol and nonsterol isoprene synthesis. Secondly, the squalene epoxidase ERG1 catalyzes the stereospecific oxidation of squalene to (S)-2,3-epoxysqualene, which is considered to be a rate-limiting enzyme in steroid biosynthesis. Then, the lanosterol synthase ERG7 catalyzes the cyclization of (S)-2,3 oxidosqualene to lanosterol, a reaction that forms the sterol core. In the next steps, lanosterol is transformed to zymosterol through a complex process involving various demethylation, reduction and desaturation reactions. The lanosterol 14-alpha-demethylase ERG11 (also known as CYP51) catalyzes C14-demethylation of lanosterol to produce 4,4'-dimethyl cholesta-8,14,24-triene-3-beta-ol, which is critical for ergosterol biosynthesis. The C-14 reductase ERG24 reduces the C14=C15 double bond of 4,4-dimethyl-cholesta-8,14,24-trienol to produce 4,4-dimethyl-cholesta-8,24-dienol. 4,4-dimethyl-cholesta-8,24-dienol is substrate of the C-4 demethylation complex ERG25-ERG26-ERG27 in which ERG25 catalyzes the three-step monooxygenation required for the demethylation of 4,4-dimethyl and 4alpha-methylsterols, ERG26 catalyzes the oxidative decarboxylation that results in a reduction of the 3-beta-hydroxy group at the C-3 carbon to an oxo group, and ERG27 is responsible for the reduction of the keto group on the C-3. ERG28 has a role as a scaffold to help anchor ERG25, ERG26 and ERG27 to the endoplasmic reticulum and ERG29 regulates the activity of the iron-containing C4-methylsterol oxidase ERG25. Then, the sterol 24-C-methyltransferase ERG6 catalyzes the methyl transfer from S-adenosyl-methionine to the C-24 of zymosterol to form fecosterol. The C-8 sterol isomerase ERG2 catalyzes the reaction which results in unsaturation at C-7 in the B ring of sterols and thus converts fecosterol to episterol. The sterol-C5-desaturase ERG3 then catalyzes the introduction of a C-5 double bond in the B ring to produce 5-dehydroepisterol. The C-22 sterol desaturase ERG5 further converts 5-dehydroepisterol into ergosta-5,7,22,24(28)-tetraen-3beta-ol by forming the C-22(23) double bond in the sterol side chain. Finally, ergosta-5,7,22,24(28)-tetraen-3beta-ol is substrate of the C-24(28) sterol reductase ERG4 to produce ergosterol. This is C-22 sterol desaturase ERG5 from Candida albicans (strain SC5314 / ATCC MYA-2876) (Yeast).